A 258-amino-acid chain; its full sequence is Regulatory protein RecX (258 aa).

It belongs to the RecX family.

The protein resides in the cytoplasm. Functionally, modulates RecA activity. This Streptococcus gordonii (strain Challis / ATCC 35105 / BCRC 15272 / CH1 / DL1 / V288) protein is Regulatory protein RecX.